We begin with the raw amino-acid sequence, 299 residues long: Porphobilinogen deaminase (299 aa).

The residue at position 234 (Cys-234) is an S-(dipyrrolylmethanemethyl)cysteine.

Belongs to the HMBS family. As to quaternary structure, monomer. Requires dipyrromethane as cofactor.

The catalysed reaction is 4 porphobilinogen + H2O = hydroxymethylbilane + 4 NH4(+). It functions in the pathway porphyrin-containing compound metabolism; protoporphyrin-IX biosynthesis; coproporphyrinogen-III from 5-aminolevulinate: step 2/4. In terms of biological role, tetrapolymerization of the monopyrrole PBG into the hydroxymethylbilane pre-uroporphyrinogen in several discrete steps. The chain is Porphobilinogen deaminase from Corynebacterium efficiens (strain DSM 44549 / YS-314 / AJ 12310 / JCM 11189 / NBRC 100395).